Consider the following 456-residue polypeptide: Phosphomethylpyrimidine synthase (456 aa).

Residues asparagine 80, methionine 109, tyrosine 139, histidine 175, 195 to 197 (SRG), 236 to 239 (DSLR), and glutamate 275 each bind substrate. Histidine 279 serves as a coordination point for Zn(2+). Position 302 (tyrosine 302) interacts with substrate. Histidine 343 serves as a coordination point for Zn(2+). [4Fe-4S] cluster-binding residues include cysteine 423, cysteine 426, and cysteine 431.

Belongs to the ThiC family. [4Fe-4S] cluster serves as cofactor.

It catalyses the reaction 5-amino-1-(5-phospho-beta-D-ribosyl)imidazole + S-adenosyl-L-methionine = 4-amino-2-methyl-5-(phosphooxymethyl)pyrimidine + CO + 5'-deoxyadenosine + formate + L-methionine + 3 H(+). The protein operates within cofactor biosynthesis; thiamine diphosphate biosynthesis. Catalyzes the synthesis of the hydroxymethylpyrimidine phosphate (HMP-P) moiety of thiamine from aminoimidazole ribotide (AIR) in a radical S-adenosyl-L-methionine (SAM)-dependent reaction. This is Phosphomethylpyrimidine synthase from Prochlorococcus marinus (strain MIT 9301).